Here is a 650-residue protein sequence, read N- to C-terminus: p-hydroxybenzoic acid efflux pump subunit AaeB (650 aa).

The next 11 membrane-spanning stretches (helical) occupy residues 7 to 27 (FPIK…HLNL), 32 to 52 (WAVM…GGDP), 61 to 81 (GILR…IMIA), 87 to 107 (VVML…SSLI), 115 to 135 (LGLA…SGGL), 148 to 168 (EIIL…PRSI), 365 to 385 (LFWL…LGVI), 402 to 422 (FVYG…YILP), 426 to 446 (QSAV…GILI), 450 to 470 (QIGT…DNPM), and 478 to 498 (IDNA…ILLI).

The protein belongs to the aromatic acid exporter ArAE (TC 2.A.85) family.

It is found in the cell inner membrane. Functionally, forms an efflux pump with AaeA. Could function as a metabolic relief valve, allowing to eliminate certain compounds when they accumulate to high levels in the cell. The chain is p-hydroxybenzoic acid efflux pump subunit AaeB from Pantoea ananatis (strain LMG 20103).